Consider the following 374-residue polypeptide: Methionine import ATP-binding protein MetN 2 (374 aa).

The 240-residue stretch at 32–271 folds into the ABC transporter domain; it reads VRFVGLGKTY…PQHEVSQTLL (240 aa). Residue 68–75 participates in ATP binding; it reads GRSGAGKS.

It belongs to the ABC transporter superfamily. Methionine importer (TC 3.A.1.24) family. The complex is composed of two ATP-binding proteins (MetN), two transmembrane proteins (MetI) and a solute-binding protein (MetQ).

The protein resides in the cell inner membrane. The enzyme catalyses L-methionine(out) + ATP + H2O = L-methionine(in) + ADP + phosphate + H(+). The catalysed reaction is D-methionine(out) + ATP + H2O = D-methionine(in) + ADP + phosphate + H(+). Part of the ABC transporter complex MetNIQ involved in methionine import. Responsible for energy coupling to the transport system. The sequence is that of Methionine import ATP-binding protein MetN 2 from Pseudomonas fluorescens (strain Pf0-1).